The following is a 947-amino-acid chain: DEAD-box ATP-dependent RNA helicase 45 (947 aa).

A compositionally biased stretch (acidic residues) spans 1 to 14 (MEEEEVVVVVDEEE). 2 disordered regions span residues 1–132 (MEEE…EDEI) and 159–221 (SMPA…EEFM). 2 stretches are compositionally biased toward basic and acidic residues: residues 15–31 (SERR…KRLD) and 42–61 (KEWQ…REQE). Low complexity predominate over residues 62–82 (AAAGAGTPAAAAGADGDSNAG). Acidic residues-rich tracts occupy residues 88–108 (DGEE…EDDG) and 196–219 (DDSD…DDEE). The Q motif motif lies at 285-313 (KTWVQSGLTSKLLDTIKKLGFEKPMPIQA). The Helicase ATP-binding domain maps to 316 to 494 (LPIIMSGRDC…RKVLTKPVEI (179 aa)). 329–336 (AKTGSGKT) lines the ATP pocket. The DEAD box motif lies at 442-445 (DEAD). The Helicase C-terminal domain maps to 479–647 (QVEILARKVL…AVPQDLKGLA (169 aa)). The tract at residues 658-710 (TEQAHGTGYGGSGFKFNEEEDEARRSAKKAQAREYGYEEDKSDSDSDEEGGVR) is disordered. A compositionally biased stretch (acidic residues) spans 697 to 706 (DKSDSDSDEE). Residues 854 to 879 (TELSVKKAKSELKRVLEDCANHALNL) adopt a coiled-coil conformation.

The protein belongs to the DEAD box helicase family. DDX46/PRP5 subfamily.

The catalysed reaction is ATP + H2O = ADP + phosphate + H(+). This is DEAD-box ATP-dependent RNA helicase 45 from Oryza sativa subsp. japonica (Rice).